The sequence spans 284 residues: UPF0276 protein Ping_0944 (284 aa).

Belongs to the UPF0276 family.

This is UPF0276 protein Ping_0944 from Psychromonas ingrahamii (strain DSM 17664 / CCUG 51855 / 37).